A 207-amino-acid chain; its full sequence is ATP phosphoribosyltransferase (207 aa).

It belongs to the ATP phosphoribosyltransferase family. Short subfamily. In terms of assembly, heteromultimer composed of HisG and HisZ subunits.

The protein localises to the cytoplasm. The enzyme catalyses 1-(5-phospho-beta-D-ribosyl)-ATP + diphosphate = 5-phospho-alpha-D-ribose 1-diphosphate + ATP. The protein operates within amino-acid biosynthesis; L-histidine biosynthesis; L-histidine from 5-phospho-alpha-D-ribose 1-diphosphate: step 1/9. Functionally, catalyzes the condensation of ATP and 5-phosphoribose 1-diphosphate to form N'-(5'-phosphoribosyl)-ATP (PR-ATP). Has a crucial role in the pathway because the rate of histidine biosynthesis seems to be controlled primarily by regulation of HisG enzymatic activity. This is ATP phosphoribosyltransferase from Geobacillus kaustophilus (strain HTA426).